The primary structure comprises 150 residues: Depactin (150 aa).

The ADF-H domain maps to 3 to 148 (SGTALDENVK…SEEAIGDKIK (146 aa)).

The protein belongs to the actin-binding proteins ADF family.

Its function is as follows. Depactin interacts with actin at some of its 12 N-terminal residues and 20 C-terminal residues. Binds to actin monomers from filaments and in solution. In Asterias amurensis (Northern Pacific seastar), this protein is Depactin.